The following is a 431-amino-acid chain: Serine--tRNA ligase (431 aa).

238-240 serves as a coordination point for L-serine; it reads TAE. 269–271 is an ATP binding site; that stretch reads RSE. L-serine is bound at residue glutamate 292. 356–359 is an ATP binding site; sequence EISS. Serine 392 is a binding site for L-serine.

Belongs to the class-II aminoacyl-tRNA synthetase family. Type-1 seryl-tRNA synthetase subfamily. As to quaternary structure, homodimer. The tRNA molecule binds across the dimer.

Its subcellular location is the cytoplasm. The catalysed reaction is tRNA(Ser) + L-serine + ATP = L-seryl-tRNA(Ser) + AMP + diphosphate + H(+). It catalyses the reaction tRNA(Sec) + L-serine + ATP = L-seryl-tRNA(Sec) + AMP + diphosphate + H(+). Its pathway is aminoacyl-tRNA biosynthesis; selenocysteinyl-tRNA(Sec) biosynthesis; L-seryl-tRNA(Sec) from L-serine and tRNA(Sec): step 1/1. Functionally, catalyzes the attachment of serine to tRNA(Ser). Is also able to aminoacylate tRNA(Sec) with serine, to form the misacylated tRNA L-seryl-tRNA(Sec), which will be further converted into selenocysteinyl-tRNA(Sec). The protein is Serine--tRNA ligase of Pectobacterium atrosepticum (strain SCRI 1043 / ATCC BAA-672) (Erwinia carotovora subsp. atroseptica).